The chain runs to 570 residues: Probable metalloreductase AIM14 (570 aa).

7 helical membrane passes run Ile-21–Leu-41, Ala-70–Leu-90, Leu-101–Arg-118, Ile-142–Asp-162, Phe-177–Met-197, Leu-204–Ser-224, and Phe-230–Phe-250. Positions Leu-101 to Leu-219 constitute a Ferric oxidoreductase domain. Positions Phe-250–Pro-388 constitute an FAD-binding FR-type domain. Residues Ser-481–Asn-505 are compositionally biased toward polar residues. Residues Ser-481–Ser-507 form a disordered region.

The protein belongs to the ferric reductase (FRE) family. AIM14 subfamily. As to quaternary structure, interacts with ribosomes.

The protein localises to the membrane. Functionally, probable cell surface metalloreductase. May be involved in iron or copper homeostasis. The sequence is that of Probable metalloreductase AIM14 (AIM14) from Saccharomyces cerevisiae (strain YJM789) (Baker's yeast).